Reading from the N-terminus, the 375-residue chain is Succinyl-diaminopimelate desuccinylase (375 aa).

His-66 contacts Zn(2+). Asp-68 is a catalytic residue. Asp-99 contacts Zn(2+). Glu-133 (proton acceptor) is an active-site residue. Residues Glu-134, Glu-162, and His-348 each contribute to the Zn(2+) site.

The protein belongs to the peptidase M20A family. DapE subfamily. Homodimer. Requires Zn(2+) as cofactor. It depends on Co(2+) as a cofactor.

The catalysed reaction is N-succinyl-(2S,6S)-2,6-diaminopimelate + H2O = (2S,6S)-2,6-diaminopimelate + succinate. Its pathway is amino-acid biosynthesis; L-lysine biosynthesis via DAP pathway; LL-2,6-diaminopimelate from (S)-tetrahydrodipicolinate (succinylase route): step 3/3. In terms of biological role, catalyzes the hydrolysis of N-succinyl-L,L-diaminopimelic acid (SDAP), forming succinate and LL-2,6-diaminopimelate (DAP), an intermediate involved in the bacterial biosynthesis of lysine and meso-diaminopimelic acid, an essential component of bacterial cell walls. The chain is Succinyl-diaminopimelate desuccinylase from Escherichia coli O157:H7.